Consider the following 722-residue polypeptide: Solute carrier organic anion transporter family member 4C1 (722 aa).

Residues 1–81 are disordered; that stretch reads MQGSKGIENP…PGSQLSELEE (81 aa). The Cytoplasmic segment spans residues 1-101; that stretch reads MQGSKGIENP…QCLQRCNTPQ (101 aa). Residues serine 15 and serine 16 each carry the phosphoserine modification. A Phosphothreonine modification is found at threonine 19. 3 positions are modified to phosphoserine: serine 24, serine 26, and serine 28. Residues 25–46 show a composition bias toward polar residues; it reads ASPSQVEVSAVASRNQNGGSQP. Residues 102–122 form a helical membrane-spanning segment; that stretch reads GFLLHYCLLALTQGIVVNGLV. Residues 123-141 lie on the Extracellular side of the membrane; it reads NISISTIEKRYEMKSSLTG. The chain crosses the membrane as a helical span at residues 142-162; that stretch reads LISSSYDISFCVLSLFVSFFG. Residues 163–168 lie on the Cytoplasmic side of the membrane; sequence ERGHKP. Residues 169-193 form a helical membrane-spanning segment; it reads RWLAFASFMIGLGALVFSLPHFFSG. At 194–218 the chain is on the extracellular side; that stretch reads RYELGSIFEDTCLTRNSTRCSSSTS. The helical transmembrane segment at 219–249 threads the bilayer; that stretch reads LLSNYFYVFVLGQLLLGTGGTPLYTLGTAFI. The Cytoplasmic portion of the chain corresponds to 250 to 269; sequence DDSVPTHKSSLYIGIGYSMS. Residues 270-290 traverse the membrane as a helical segment; sequence ILGPAIGYVLGGQLLTMYIDI. Over 291–306 the chain is Extracellular; sequence AMGQSSDLTEDDPRWL. The chain crosses the membrane as a helical span at residues 307 to 331; the sequence is GAWWIGFLLAWLFAWSLIMPFSCFP. Topologically, residues 332–376 are cytoplasmic; it reads KHLPGTAKIQAGKTSQTHQNNSTSFQHTDENFGKSIKDFPTAVKN. The helical transmembrane segment at 377–398 threads the bilayer; it reads LMRNTVFICLVLSTTSEALITT. At 399–418 the chain is on the extracellular side; the sequence is GFATFLPKFIENQFGLTSSF. The helical transmembrane segment at 419-442 threads the bilayer; the sequence is AATLGGAVLIPGAALGQILGGVLV. Residues 443–446 lie on the Cytoplasmic side of the membrane; that stretch reads SKFK. A helical membrane pass occupies residues 447-470; that stretch reads MKCKNTMKFALCTSGVALVLSFVF. The Extracellular portion of the chain corresponds to 471 to 578; that stretch reads IYAKCENEPF…RTRCSNLPIF (108 aa). Residues 494–549 enclose the Kazal-like domain; sequence GNLTAPCNANCNCLRSYYYPLCGSDGIQYFSPCFAGCLNSVSNRKPKVYYNCSCIE. Intrachain disulfides connect cysteine 500-cysteine 530, cysteine 506-cysteine 526, and cysteine 515-cysteine 547. A helical transmembrane segment spans residues 579–601; the sequence is LGIFFITVIFTFMAGTPITVSIL. Residues 602–610 are Cytoplasmic-facing; sequence RCVNHRHRS. Residues 611 to 636 traverse the membrane as a helical segment; sequence LALGVQFMLLRLLGTIPGPIIFGVII. The Extracellular portion of the chain corresponds to 637–670; the sequence is DSTCVLWDVNECGIKGACWIYDNIKMAHMLVAIS. A helical membrane pass occupies residues 671 to 688; the sequence is VTCKVITIFFNGLAIVLY. Topologically, residues 689–722 are cytoplasmic; sequence KPPPPGTEVSFQSQNVIVSTISVEEDLDKAENEG.

The protein belongs to the organo anion transporter (TC 2.A.60) family. In terms of tissue distribution, strongly expressed in initial segment of epididymis and seminal vesicles.

It is found in the basolateral cell membrane. It catalyses the reaction estrone 3-sulfate(out) = estrone 3-sulfate(in). It carries out the reaction L-thyroxine(out) = L-thyroxine(in). The catalysed reaction is 3,3',5-triiodo-L-thyronine(out) = 3,3',5-triiodo-L-thyronine(in). The enzyme catalyses chenodeoxycholate(out) = chenodeoxycholate(in). It catalyses the reaction glycocholate(out) = glycocholate(in). It carries out the reaction L-homoarginine(in) = L-homoarginine(out). The catalysed reaction is L-arginine(in) = L-arginine(out). The enzyme catalyses N(omega),N(omega)-dimethyl-L-arginine(out) = N(omega),N(omega)-dimethyl-L-arginine(in). In terms of biological role, mediates the transport of organic anions such as steroids (estrone 3-sulfate, chenodeoxycholate, glycocholate) and thyroid hormones (3,3',5-triiodo-L-thyronine (T3), L-thyroxine (T4)), in the kidney. Capable of transporting cAMP and pharmacological substances such as digoxin, ouabain and methotrexate. Transport is independent of sodium, chloride ion, and ATP. Transport activity is stimulated by an acidic extracellular environment due to increased substrate affinity to the transporter. The driving force for this transport activity is currently not known. The role of hydrogencarbonate (HCO3(-), bicarbonate) as the probable counteranion that exchanges for organic anions is still not well defined. Functions as an uptake transporter at the apical membrane, suggesting a role in renal reabsorption. Involved in the renal secretion of the uremic toxin ADMA (N(omega),N(omega)-dimethyl-L-arginine or asymmetrical dimethylarginine), which is associated to cardiovascular events and mortality, and the structurally related amino acids L-arginine and L-homoarginine (a cardioprotective biomarker). Can act bidirectionally, suggesting a dual protective role of this transport protein; exporting L-homoarginine after being synthesized in proximal tubule cells, and mediating uptake of ADMA from the blood into proximal tubule cells where it is degraded by the enzyme dimethylarginine dimethylaminohydrolase 1 (DDAH1). May be involved in sperm maturation by enabling directed movement of organic anions and compounds within or between cells. This ion-transporting process is important to maintain the strict epididymal homeostasis necessary for sperm maturation. May have a role in secretory functions since seminal vesicle epithelial cells are assumed to secrete proteins involved in decapacitation by modifying surface proteins to facilitate the acquisition of the ability to fertilize the egg. In Mus musculus (Mouse), this protein is Solute carrier organic anion transporter family member 4C1.